We begin with the raw amino-acid sequence, 373 residues long: GPN-loop GTPase 1 (373 aa).

At alanine 2 the chain carries N-acetylalanine. 29–34 (GSGKTT) lines the GTP pocket. The short motif at 86-88 (GPN) is the Gly-Pro-Asn (GPN)-loop; involved in dimer interface element. 189 to 192 (NKTD) is a binding site for GTP. 3 positions are modified to phosphoserine: serine 301, serine 312, and serine 314. The interval 304-373 (LDTGTATGSS…SMAQYWKKNK (70 aa)) is disordered. A Phosphothreonine modification is found at threonine 328. Residues 330–342 (DEEDEEADSDTDD) are compositionally biased toward acidic residues. Serine 338 bears the Phosphoserine mark. Position 340 is a phosphothreonine (threonine 340). The segment covering 343–355 (IDHRVTEESREEP) has biased composition (basic and acidic residues).

This sequence belongs to the GPN-loop GTPase family. Heterodimer with GPN3. Binds to RNA polymerase II (RNAPII). Interacts directly with RNAPII subunits RPB4 and RPB7 and the CTD of RPB1. Interacts with XPA.

The protein localises to the cytoplasm. It is found in the nucleus. Functionally, small GTPase required for proper nuclear import of RNA polymerase II (RNAPII). May act at an RNAP assembly step prior to nuclear import. Forms an interface between the RNA polymerase II enzyme and chaperone/scaffolding proteins, suggesting that it is required to connect RNA polymerase II to regulators of protein complex formation. May be involved in nuclear localization of XPA. The polypeptide is GPN-loop GTPase 1 (Bos taurus (Bovine)).